We begin with the raw amino-acid sequence, 131 residues long: Large ribosomal subunit protein uL18 (131 aa).

The protein belongs to the universal ribosomal protein uL18 family. In terms of assembly, part of the 50S ribosomal subunit; part of the 5S rRNA/L5/L18/L25 subcomplex. Contacts the 5S and 23S rRNAs.

Functionally, this is one of the proteins that bind and probably mediate the attachment of the 5S RNA into the large ribosomal subunit, where it forms part of the central protuberance. In Corynebacterium kroppenstedtii (strain DSM 44385 / JCM 11950 / CIP 105744 / CCUG 35717), this protein is Large ribosomal subunit protein uL18.